The primary structure comprises 465 residues: Sensor histidine kinase ZraS (465 aa).

Residues 1 to 14 (MSFIRLHKDAAAMW) lie on the Cytoplasmic side of the membrane. The chain crosses the membrane as a helical span at residues 15 to 35 (LSRLLPAAIFILVGLFSIMVI). Residues 36–203 (RDYGRESAAA…ATQAREWRNT (168 aa)) are Periplasmic-facing. The helical transmembrane segment at 204–224 (LIVLSALAAVLLATLLAFFWY) threads the bilayer. Residues 225–465 (QRYQRSHREL…WLPVIARQQD (241 aa)) are Cytoplasmic-facing. Positions 253–461 (GVAHEIRNPL…VFTIWLPVIA (209 aa)) constitute a Histidine kinase domain. H256 carries the phosphohistidine; by autocatalysis modification.

In terms of processing, autophosphorylated.

The protein localises to the cell inner membrane. It carries out the reaction ATP + protein L-histidine = ADP + protein N-phospho-L-histidine.. Activity of the ZraS/ZraR two-component system is repressed by the zinc-bound form of ZraP, which probably interacts with the periplasmic region of ZraS. In terms of biological role, part of the Zra signaling pathway, an envelope stress response (ESR) system composed of the periplasmic accessory protein ZraP, the histidine kinase ZraS and the transcriptional regulator ZraR. The ZraPSR system contributes to antibiotic resistance and is important for membrane integrity in the presence of membrane-targeting biocides. ZraS is a member of the two-component regulatory system ZraS/ZraR. Functions as a membrane-associated sensor kinase that phosphorylates ZraR in response to high concentrations of Zn(2+) or Pb(2+) in the medium. The sequence is that of Sensor histidine kinase ZraS (zraS) from Salmonella typhi.